We begin with the raw amino-acid sequence, 468 residues long: Aldehyde dehydrogenase family 3 member B1 (468 aa).

Position 1 is an N-acetylmethionine (methionine 1). NAD(+) is bound at residue 188 to 193 (GNPQVG). Active-site residues include glutamate 210 and cysteine 244. Residue cysteine 463 is the site of S-palmitoyl cysteine attachment. Cysteine 465 is subject to Cysteine methyl ester. Cysteine 465 is lipidated: S-geranylgeranyl cysteine. Positions 466 to 468 (TLL) are cleaved as a propeptide — removed in mature form.

Belongs to the aldehyde dehydrogenase family. Post-translationally, dually lipidated in the C-terminus; prenylation occurs prior to, and is a prerequisite for palmitoylation. It is also required for activity towards long-chain substrates.

The protein resides in the cell membrane. It carries out the reaction an aldehyde + NAD(+) + H2O = a carboxylate + NADH + 2 H(+). The catalysed reaction is a long-chain fatty aldehyde + NAD(+) + H2O = a long-chain fatty acid + NADH + 2 H(+). It catalyses the reaction a medium-chain fatty aldehyde + NAD(+) + H2O = a medium-chain fatty acid + NADH + 2 H(+). The enzyme catalyses octanal + NAD(+) + H2O = octanoate + NADH + 2 H(+). It carries out the reaction nonanal + NAD(+) + H2O = nonanoate + NADH + 2 H(+). The catalysed reaction is hexadecanoate + NADH + 2 H(+) = hexadecanal + NAD(+) + H2O. It catalyses the reaction (2E)-octenal + NAD(+) + H2O = (2E)-octenoate + NADH + 2 H(+). The enzyme catalyses (E)-non-2-enal + NAD(+) + H2O = (E)-non-2-enoate + NADH + 2 H(+). It carries out the reaction (E)-4-hydroxynon-2-enal + NAD(+) + H2O = (E)-4-hydroxynon-2-enoate + NADH + 2 H(+). The catalysed reaction is (2E)-hexadecenal + NAD(+) + H2O = (E)-hexadec-2-enoate + NADH + 2 H(+). It catalyses the reaction benzaldehyde + NAD(+) + H2O = benzoate + NADH + 2 H(+). The enzyme catalyses an aldehyde + NADP(+) + H2O = a carboxylate + NADPH + 2 H(+). It carries out the reaction a medium-chain fatty aldehyde + NADP(+) + H2O = a medium-chain fatty acid + NADPH + 2 H(+). The catalysed reaction is hexanal + NADP(+) + H2O = hexanoate + NADPH + 2 H(+). It catalyses the reaction octanal + NADP(+) + H2O = octanoate + NADPH + 2 H(+). The enzyme catalyses nonanal + NADP(+) + H2O = nonanoate + NADPH + 2 H(+). It carries out the reaction (2E)-octenal + NADP(+) + H2O = (2E)-octenoate + NADPH + 2 H(+). The catalysed reaction is (E)-non-2-enal + NADP(+) + H2O = (E)-non-2-enoate + NADPH + 2 H(+). It catalyses the reaction (E)-4-hydroxynon-2-enal + NADP(+) + H2O = (E)-4-hydroxynon-2-enoate + NADPH + 2 H(+). The enzyme catalyses benzaldehyde + NADP(+) + H2O = benzoate + NADPH + 2 H(+). It functions in the pathway alcohol metabolism; ethanol degradation; acetate from ethanol: step 2/2. Its function is as follows. Oxidizes medium and long chain saturated and unsaturated fatty aldehydes generated in the plasma membrane into non-toxic fatty acids. May have a protective role against the cytotoxicity induced by lipid peroxidation. Short-chain fatty aldehydes are not good substrates. Can use both NADP(+) and NAD(+) as electron acceptor in vitro, however in vivo preference will depend on their tissue levels. Low activity towards acetaldehyde and 3,4-dihydroxyphenylacetaldehyde. Able to metabolize aromatic aldehydes such as benzaldehyde to their acid form. The sequence is that of Aldehyde dehydrogenase family 3 member B1 (ALDH3B1) from Bos taurus (Bovine).